We begin with the raw amino-acid sequence, 321 residues long: Torsin-2A (321 aa).

The first 26 residues, 1–26 (MAVARHGYRPWGSILGLLGLALAAAA), serve as a signal peptide directing secretion. ATP is bound at residue 93–100 (GWTGTGKS). The N-linked (GlcNAc...) asparagine glycan is linked to Asn149.

Belongs to the ClpA/ClpB family. Torsin subfamily. Homohexamer. Interacts with TOR1AIP1. Post-translationally, N-glycosylated. As to expression, expressed at similar levels in liver, muscle and brain (at protein level).

It is found in the endoplasmic reticulum lumen. This is Torsin-2A (Tor2a) from Mus musculus (Mouse).